Here is a 698-residue protein sequence, read N- to C-terminus: D-(-)-3-hydroxybutyrate oligomer hydrolase (698 aa).

The first 32 residues, Met-1–Ala-32, serve as a signal peptide directing secretion. The Charge relay system role is filled by Ser-310.

Belongs to the D-(-)-3-hydroxybutyrate oligomer hydrolase family.

Its subcellular location is the secreted. It carries out the reaction (3R)-hydroxybutanoate dimer + H2O = 2 (R)-3-hydroxybutanoate + H(+). It functions in the pathway lipid metabolism; butanoate metabolism. Its function is as follows. Participates in the degradation of poly-3-hydroxybutyrate (PHB). It works downstream of poly(3-hydroxybutyrate) depolymerase, hydrolyzing D(-)-3-hydroxybutyrate oligomers of various length (3HB-oligomers) into 3HB-monomers. This Burkholderia thailandensis (strain ATCC 700388 / DSM 13276 / CCUG 48851 / CIP 106301 / E264) protein is D-(-)-3-hydroxybutyrate oligomer hydrolase.